Consider the following 494-residue polypeptide: Glutamyl-tRNA(Gln) amidotransferase subunit A (494 aa).

Catalysis depends on charge relay system residues Lys81 and Ser156. The active-site Acyl-ester intermediate is Ser180.

Belongs to the amidase family. GatA subfamily. In terms of assembly, heterotrimer of A, B and C subunits.

It catalyses the reaction L-glutamyl-tRNA(Gln) + L-glutamine + ATP + H2O = L-glutaminyl-tRNA(Gln) + L-glutamate + ADP + phosphate + H(+). In terms of biological role, allows the formation of correctly charged Gln-tRNA(Gln) through the transamidation of misacylated Glu-tRNA(Gln) in organisms which lack glutaminyl-tRNA synthetase. The reaction takes place in the presence of glutamine and ATP through an activated gamma-phospho-Glu-tRNA(Gln). The protein is Glutamyl-tRNA(Gln) amidotransferase subunit A of Mycolicibacterium gilvum (strain PYR-GCK) (Mycobacterium gilvum (strain PYR-GCK)).